A 243-amino-acid polypeptide reads, in one-letter code: MEWEDEAFVLSARVHGETGAIVELLTQERGKFVAHVSGAASRRMKPFLQAGAKVIARYRARMSDQMGAATLEPMGEGPSSLFDEPLALSGLSAAASVAAGALPEREAHPGAFHALEALIAALAIPAIWPAVYVRFEAGLLQDLGFGLDLSKCAATGSLDDLVYVSPRTGRAVSRAAGQPYHDKLLPLPPFMLSAQGGLVEGDVKAGLDITGHFLEQFVFHPLNRPLPPARVWLLDRLGEAGRL.

Belongs to the RecO family.

In terms of biological role, involved in DNA repair and RecF pathway recombination. The sequence is that of DNA repair protein RecO from Caulobacter sp. (strain K31).